A 190-amino-acid polypeptide reads, in one-letter code: Peptidyl-tRNA hydrolase (190 aa).

Phe14 serves as a coordination point for tRNA. His19 serves as the catalytic Proton acceptor. Residues Met64, Asn66, and Asn112 each contribute to the tRNA site.

The protein belongs to the PTH family. As to quaternary structure, monomer.

It localises to the cytoplasm. It catalyses the reaction an N-acyl-L-alpha-aminoacyl-tRNA + H2O = an N-acyl-L-amino acid + a tRNA + H(+). Its function is as follows. Hydrolyzes ribosome-free peptidyl-tRNAs (with 1 or more amino acids incorporated), which drop off the ribosome during protein synthesis, or as a result of ribosome stalling. In terms of biological role, catalyzes the release of premature peptidyl moieties from peptidyl-tRNA molecules trapped in stalled 50S ribosomal subunits, and thus maintains levels of free tRNAs and 50S ribosomes. The protein is Peptidyl-tRNA hydrolase of Staphylococcus aureus (strain bovine RF122 / ET3-1).